Here is a 267-residue protein sequence, read N- to C-terminus: Hydroxynaphthalene reductase-like protein Arp2 (267 aa).

NADP(+) is bound by residues I25, N45, D71, and N98. Residues S147 and S148 each act as proton donor in the active site. Positions 162, 166, 195, and 197 each coordinate NADP(+). Y162 (proton acceptor) is an active-site residue. K166 serves as the catalytic Lowers pKa of active site Tyr.

This sequence belongs to the short-chain dehydrogenases/reductases (SDR) family.

Hydroxynaphthalene reductase-like protein; part of the Pks2 gene cluster that mediates the formation of infectious structures (appressoria), enabling these fungi to kill insects faster. The product of the Pks2 gene cluster is different from the one of Pks1 and has still not been identified. The protein is Hydroxynaphthalene reductase-like protein Arp2 of Metarhizium brunneum (strain ARSEF 3297).